A 365-amino-acid polypeptide reads, in one-letter code: tRNA-specific 2-thiouridylase MnmA (365 aa).

ATP is bound by residues 9-16 (GLSGGVDS) and Met35. The tract at residues 95-97 (NPD) is interaction with target base in tRNA. The active-site Nucleophile is the Cys100. A disulfide bridge links Cys100 with Cys196. Gly124 lines the ATP pocket. The interval 146–148 (KDQ) is interaction with tRNA. Residue Cys196 is the Cysteine persulfide intermediate of the active site. Residues 315–316 (RY) are interaction with tRNA.

Belongs to the MnmA/TRMU family.

It localises to the cytoplasm. It carries out the reaction S-sulfanyl-L-cysteinyl-[protein] + uridine(34) in tRNA + AH2 + ATP = 2-thiouridine(34) in tRNA + L-cysteinyl-[protein] + A + AMP + diphosphate + H(+). In terms of biological role, catalyzes the 2-thiolation of uridine at the wobble position (U34) of tRNA, leading to the formation of s(2)U34. In Dechloromonas aromatica (strain RCB), this protein is tRNA-specific 2-thiouridylase MnmA.